Reading from the N-terminus, the 303-residue chain is Crk-like protein (303 aa).

The region spanning 14-102 is the SH2 domain; that stretch reads WYMGPVSRQE…LDTTTLIEPA (89 aa). One can recognise an SH3 1 domain in the interval 123–183; sequence ENLEYVRTLY…PVPYVEKLVR (61 aa). Residue Tyr127 is modified to Phosphotyrosine. The interval 184–204 is disordered; that stretch reads SSPHGKHGNRNSNSYGIPEPA. Tyr207 carries the post-translational modification Phosphotyrosine. An SH3 2 domain is found at 235–296; it reads NGPVFAKAIQ…PFTHVKIFDP (62 aa).

Belongs to the CRK family. As to quaternary structure, interacts with INPP5D/SHIP1. Interacts with DOCK2 and EPOR. Interacts with phosphorylated CBLB and IRS4. Interacts with BCAR1/CAS and NEDD9/HEF1.

May mediate the transduction of intracellular signals. In Rattus norvegicus (Rat), this protein is Crk-like protein.